Here is a 184-residue protein sequence, read N- to C-terminus: Fungal defensin copsin (184 aa).

The first 23 residues, 1 to 23 (MKLSTSLLAIVAVASTFIGNALS), serve as a signal peptide directing secretion. A propeptide spanning residues 24–127 (ATTVPGCFAE…LGRVLPVEKR (104 aa)) is cleaved from the precursor. Residue Gln-128 is modified to Pyrrolidone carboxylic acid. 6 cysteine pairs are disulfide-bonded: Cys-130–Cys-159, Cys-137–Cys-167, Cys-145–Cys-175, Cys-149–Cys-177, Cys-152–Cys-184, and Cys-162–Cys-181.

Belongs to the invertebrate defensin family. Contains a unique connectivity of 6 cysteine bonds in contrast to most other CS-alpha-beta defensins which are linked by 3 or 4 disulfide bonds. Post-translationally, disulfide bonds are essential for structural integrity and antibacterial activity, since activity is lost after treatment with reducing agents. Thanks to disulfide bonds and N-terminal pyroglutamate, the protein is extremely stable in a wide pH and temperature range and insensitive toward proteases.

Its subcellular location is the secreted. It is found in the target cell membrane. Antimicrobial peptide that acts against Gram-positive bacteria (Listeria spp., Enterococcus spp., B.subtilis, B.anthracis, P.aeruginosa). Is not active against Gram-negative bacteria. It selectively inhibits peptidoglycan biosynthesis through complex formation with the cell wall precursor lipid II (1:1 molar ratio), probably anchoring lipid II to the membrane, thus inhibiting cell wall synthesis. The interaction with lipid II involves the third position of the pentapeptide. Shows bactericidal activity at about 2-fold minimal inhibitory concentrations (MIC), but does not form pore across the membrane. In Coprinopsis cinerea (Inky cap fungus), this protein is Fungal defensin copsin.